A 555-amino-acid chain; its full sequence is Bicyclo-germacrene synthase (555 aa).

Mg(2+) contacts are provided by Asp-311 and Glu-315. A DDXXD motif motif is present at residues 311 to 315; that stretch reads DDTYE. Homodimerization stretches follow at residues 316–322 and 392–429; these read YATLDEL and EAKWIYNNSIPTVEEYMKVAFVTCGYMMLSTTSLVGVG. Mg(2+)-binding residues include Asp-459 and Glu-467.

It belongs to the terpene synthase family. Homodimer. Mn(2+) is required as a cofactor. Requires Mg(2+) as cofactor. In terms of tissue distribution, expressed in peltate glandular trichomes. Present at low levels in flowers, leaves and stems.

The catalysed reaction is (2E,6E)-farnesyl diphosphate = bicyclogermacrene + diphosphate. It catalyses the reaction (2E)-geranyl diphosphate = terpinolene + diphosphate. The enzyme catalyses (2E)-geranyl diphosphate = (4R)-limonene + diphosphate. It carries out the reaction (2E)-geranyl diphosphate + H2O = (2E)-geraniol + diphosphate. The catalysed reaction is (2E,6E)-farnesyl diphosphate = allo-aromadendrene + diphosphate. It functions in the pathway secondary metabolite biosynthesis; terpenoid biosynthesis. Its function is as follows. Involved in the biosynthesis of phenolic sesquiterpenes natural products. Sesquiterpene synthase converting (2E,6E)-farnesyl diphosphate (FPP) to alloaromadendrene and bicyclo-germacrene. The product formation is dependent on the metal ions present and in presence of manganese, bicyclo-germacrene is greatly favored while both alloaromadendrene and bicyclo-germacrene are produced in equivalent amounts in the presence of magnesium. Can also convert geranyl diphosphate (GPP) to terpinolene, limonene and geraniol, and this conversion is not affected by the presence of magnesium or manganese. The chain is Bicyclo-germacrene synthase (TPS4) from Origanum vulgare (Wild marjoram).